Consider the following 99-residue polypeptide: Aspartyl/glutamyl-tRNA(Asn/Gln) amidotransferase subunit C (99 aa).

It belongs to the GatC family. Heterotrimer of A, B and C subunits.

The catalysed reaction is L-glutamyl-tRNA(Gln) + L-glutamine + ATP + H2O = L-glutaminyl-tRNA(Gln) + L-glutamate + ADP + phosphate + H(+). It carries out the reaction L-aspartyl-tRNA(Asn) + L-glutamine + ATP + H2O = L-asparaginyl-tRNA(Asn) + L-glutamate + ADP + phosphate + 2 H(+). Functionally, allows the formation of correctly charged Asn-tRNA(Asn) or Gln-tRNA(Gln) through the transamidation of misacylated Asp-tRNA(Asn) or Glu-tRNA(Gln) in organisms which lack either or both of asparaginyl-tRNA or glutaminyl-tRNA synthetases. The reaction takes place in the presence of glutamine and ATP through an activated phospho-Asp-tRNA(Asn) or phospho-Glu-tRNA(Gln). The polypeptide is Aspartyl/glutamyl-tRNA(Asn/Gln) amidotransferase subunit C (Bifidobacterium longum (strain NCC 2705)).